A 1058-amino-acid polypeptide reads, in one-letter code: Leucine--tRNA ligase, cytoplasmic (1058 aa).

The 'HIGH' region signature appears at 48-58; that stretch reads PYMNGRLHVGH. The 'KMSKS' region motif lies at 711 to 715; sequence KMSKS. Lys714 serves as a coordination point for ATP.

The protein belongs to the class-I aminoacyl-tRNA synthetase family.

Its subcellular location is the cytoplasm. It catalyses the reaction tRNA(Leu) + L-leucine + ATP = L-leucyl-tRNA(Leu) + AMP + diphosphate. In Dictyostelium discoideum (Social amoeba), this protein is Leucine--tRNA ligase, cytoplasmic (leuS).